Here is a 389-residue protein sequence, read N- to C-terminus: Lipid-A-disaccharide synthase (389 aa).

The protein belongs to the LpxB family.

The catalysed reaction is a lipid X + a UDP-2-N,3-O-bis[(3R)-3-hydroxyacyl]-alpha-D-glucosamine = a lipid A disaccharide + UDP + H(+). The protein operates within bacterial outer membrane biogenesis; LPS lipid A biosynthesis. Functionally, condensation of UDP-2,3-diacylglucosamine and 2,3-diacylglucosamine-1-phosphate to form lipid A disaccharide, a precursor of lipid A, a phosphorylated glycolipid that anchors the lipopolysaccharide to the outer membrane of the cell. The protein is Lipid-A-disaccharide synthase of Paraburkholderia phymatum (strain DSM 17167 / CIP 108236 / LMG 21445 / STM815) (Burkholderia phymatum).